The primary structure comprises 519 residues: Alkaline phosphatase, tissue-nonspecific isozyme (519 aa).

The first 16 residues, 1-16 (MKAFLLTLLAQLCSAS), serve as a signal peptide directing secretion. D59 contacts Mg(2+). Residues D59 and S109 each coordinate Zn(2+). Catalysis depends on S109, which acts as the Phosphoserine intermediate. C138 and C200 form a disulfide bridge. Residue N139 is glycosylated (N-linked (GlcNAc...) asparagine). T172 contributes to the Mg(2+) binding site. N-linked (GlcNAc...) asparagine glycosylation is present at N229. Residue E234 participates in Ca(2+) binding. N278 carries N-linked (GlcNAc...) asparagine glycosylation. Residues F289 and E290 each coordinate Ca(2+). Residue N302 is glycosylated (N-linked (GlcNAc...) asparagine). D305 contributes to the Ca(2+) binding site. Position 331 (E331) interacts with Mg(2+). 4 residues coordinate Zn(2+): D336, H340, D377, and H378. N429 carries N-linked (GlcNAc...) asparagine glycosylation. H453 serves as a coordination point for Zn(2+). Cysteines 488 and 496 form a disulfide. A lipid anchor (GPI-anchor amidated serine) is attached at S498. Positions 499-519 (AARPAATATLLPVLLLLLLLC) are cleaved as a propeptide — removed in mature form.

Belongs to the alkaline phosphatase family. As to quaternary structure, homodimer. Mg(2+) is required as a cofactor. Requires Zn(2+) as cofactor. It depends on Ca(2+) as a cofactor.

The protein resides in the cell membrane. It is found in the extracellular vesicle membrane. It carries out the reaction a phosphate monoester + H2O = an alcohol + phosphate. The catalysed reaction is diphosphate + H2O = 2 phosphate + H(+). It catalyses the reaction pyridoxal 5'-phosphate + H2O = pyridoxal + phosphate. The enzyme catalyses phosphoethanolamine + H2O = ethanolamine + phosphate. It carries out the reaction ATP + H2O = ADP + phosphate + H(+). The catalysed reaction is ADP + H2O = AMP + phosphate + H(+). It catalyses the reaction AMP + H2O = adenosine + phosphate. Functionally, alkaline phosphatase that metabolizes various phosphate compounds and plays a key role in skeletal mineralization and adaptive thermogenesis. Has broad substrate specificity and can hydrolyze a considerable variety of compounds: however, only a few substrates, such as diphosphate (inorganic pyrophosphate; PPi) and pyridoxal 5'-phosphate (PLP) are natural substrates. Plays an essential role in skeletal and dental mineralization via its ability to hydrolyze extracellular diphosphate, a potent mineralization inhibitor, to phosphate: it thereby promotes hydroxyapatite crystal formation and increases inorganic phosphate concentration. Catalyzes dephosphorylation of PLP to pyridoxal (PL), the transportable form of vitamin B6, in order to provide a sufficient amount of PLP in the brain, an essential cofactor for enzymes catalyzing the synthesis of diverse neurotransmitters. Additionally, also able to mediate ATP degradation in a stepwise manner to adenosine, thereby regulating the availability of ligands for purinergic receptors. Involved in the establishment and growth of feather germs. This chain is Alkaline phosphatase, tissue-nonspecific isozyme (ALPL), found in Gallus gallus (Chicken).